We begin with the raw amino-acid sequence, 127 residues long: Competence protein ComGF (127 aa).

In terms of assembly, the transformation pili are flexible filaments, consisting mainly of the major pilin ComGC and smaller amounts of the minor pilins, including at least ComGD, ComGF and ComGG. Interacts with ComGD. Interacts with ComGG.

Its subcellular location is the cell membrane. It is found in the fimbrium. Its function is as follows. Required for formation of the type IV-like pilus (T4P) that plays a role in transformation. Involved in transformation. Transformation pili are dynamically extended and retracted, perhaps thereby promoting DNA uptake and transformation. Required for transformation and DNA binding. This Bacillus subtilis (strain 168) protein is Competence protein ComGF (comGF).